Here is a 431-residue protein sequence, read N- to C-terminus: MSWVQATLLARGLCRAWGGTCGAALTGTSISQVPRRLPRGLHCSAAAHSSEQSLVPSPPEPRQRPTKALVPFEDLFGQAPGGERDKASFLQTVQKFAEHSVRKRGHIDFIYLALRKMREYGVERDLAVYNQLLNIFPKEVFRPRNIIQRIFVHYPRQQECGIAVLEQMENHGVMPNKETEFLLIQIFGRKSYPMLKLVRLKLWFPRFMNVNPFPVPRDLPQDPVELAMFGLRHMEPDLSARVTIYQVPLPKDSTGAADPPQPHIVGIQSPDQQAALARHNPARPVFVEGPFSLWLRNKCVYYHILRADLLPPEEREVEETPEEWNLYYPMQLDLEYVRSGWDNYEFDINEVEEGPVFAMCMAGAHDQATMAKWIQGLQETNPTLAQIPVVFRLAGSTRELQTSSAGLEEPPLPEDHQEEDDNLQRQQQGQS.

The N-terminal 48 residues, 1 to 48 (MSWVQATLLARGLCRAWGGTCGAALTGTSISQVPRRLPRGLHCSAAAH), are a transit peptide targeting the mitochondrion. Lys-372 is covalently cross-linked (Glycyl lysine isopeptide (Lys-Gly) (interchain with G-Cter in ubiquitin)). A disordered region spans residues 400 to 431 (LQTSSAGLEEPPLPEDHQEEDDNLQRQQQGQS).

The protein belongs to the ECSIT family. As to quaternary structure, interacts with MAP3K1, SMAD4 and TRAF6. Interacts with SMAD1 only after BMP4-treatment. Part of the mitochondrial complex I assembly/MCIA complex that comprises at least the core subunits TMEM126B, NDUFAF1, ECSIT and ACAD9 and complement subunits such as COA1 and TMEM186. Interacts with NDUFAF1. Interacts with ACAD9. Interacts with TRIM59. Interacts with TMEM70 and TMEM242. Interacts (when ubiquitinated) with NF-kappa-B subunits RELA and NFKB1. Interacts with RIGI, IFIT1 and MAVS; these interactions promote RLR-mediated type I IFN induction. Interacts with SQSTM1; this interaction inhibits TLR4 signaling via functional regulation of the TRAF6-ECSIT complex. Interacts with cereblon/CRBN; this interaction inhibits the ubiquitination of ECSIT. In terms of processing, ubiquitinated on Lys-372; leading to translocation in the nucleus together with RELA and NFKB1 and expression of NF-kappa-B-dependent genes.

It is found in the cytoplasm. Its subcellular location is the nucleus. The protein resides in the mitochondrion. In terms of biological role, adapter protein that plays a role in different signaling pathways including TLRs and IL-1 pathways or innate antiviral induction signaling. Plays a role in the activation of NF-kappa-B by forming a signal complex with TRAF6 and TAK1/MAP3K7 to activate TAK1/MAP3K7 leading to activation of IKKs. Once ubiquitinated, interacts with the dissociated RELA and NFKB1 proteins and translocates to the nucleus where it induces NF-kappa-B-dependent gene expression. Plays a role in innate antiviral immune response by bridging the pattern recognition receptors RIGI and MDA5/IFIT1 to the MAVS complex at the mitochondrion. Promotes proteolytic activation of MAP3K1. Involved in the BMP signaling pathway. Required for normal embryonic development. Functionally, as part of the MCIA complex, involved in the assembly of the mitochondrial complex I. The chain is Evolutionarily conserved signaling intermediate in Toll pathway, mitochondrial from Homo sapiens (Human).